Reading from the N-terminus, the 245-residue chain is 23S rRNA (guanosine-2'-O-)-methyltransferase RlmB (245 aa).

The S-adenosyl-L-methionine site is built by Gly-197, Ile-217, and Leu-226.

The protein belongs to the class IV-like SAM-binding methyltransferase superfamily. RNA methyltransferase TrmH family. RlmB subfamily.

Its subcellular location is the cytoplasm. It carries out the reaction guanosine(2251) in 23S rRNA + S-adenosyl-L-methionine = 2'-O-methylguanosine(2251) in 23S rRNA + S-adenosyl-L-homocysteine + H(+). Its function is as follows. Specifically methylates the ribose of guanosine 2251 in 23S rRNA. The polypeptide is 23S rRNA (guanosine-2'-O-)-methyltransferase RlmB (Pasteurella multocida (strain Pm70)).